Here is a 927-residue protein sequence, read N- to C-terminus: GPI inositol-deacylase (927 aa).

The Cytoplasmic segment spans residues 1–4 (MNPL). The chain crosses the membrane as a helical span at residues 5–25 (SAVFNSVVLVLLALGVTDVFF). At 26 to 595 (SYESSRCSMT…QIVRFHGIYL (570 aa)) the chain is on the lumenal side. Residues Asn75 and Asn155 are each glycosylated (N-linked (GlcNAc...) asparagine). Ser169 is an active-site residue. N-linked (GlcNAc...) asparagine glycosylation is found at Asn230, Asn362, Asn397, Asn432, Asn444, and Asn482. A helical membrane pass occupies residues 596-616 (PVYIVANLLLAYGAQLHSILI). At 617-672 (QGSCMDLDLSFDVAAKPYKVDPVLIICKYLLNYKWFKNYWDGLMLPQLDAVQLHAY) the chain is on the cytoplasmic side. Residues 673–693 (GFWFPLASLFFFIFGTSIAYW) form a helical membrane-spanning segment. Topologically, residues 694-733 (SSIGLQAAVRILSSLWIYLKRPSMFPKESKCITYRVYAET) are lumenal. The helical transmembrane segment at 734–754 (LFFAFISWRSCGTFSLLLVFL) threads the bilayer. The Cytoplasmic segment spans residues 755-821 (RYLSKVLILY…KALDDCLKMH (67 aa)). A helical membrane pass occupies residues 822–842 (FTILHLNLWIVLLGLPSFIYW). The Lumenal segment spans residues 843–858 (LKTLRYTIQLDPDPNR). A helical membrane pass occupies residues 859 to 879 (VSALVLIFILEILMNSTTSAI). Over 880–887 (KSSVCLKT) the chain is Cytoplasmic. Residues 888–908 (AAVLQLPLSIIVVAFGTLHLY) form a helical membrane-spanning segment. Residues 909–927 (RISNLIAFSLFLHVVCCFV) lie on the Lumenal side of the membrane.

It belongs to the GPI inositol-deacylase family.

It is found in the endoplasmic reticulum membrane. In terms of biological role, GPI inositol-deacylase that catalyzes the remove of the acyl chain linked to the 2-OH position of inositol ring from the GPI-anchored protein (GPI-AP) in the endoplasmic reticulum. Initiates the post-attachment remodeling phase of GPI-AP biogenesis and participates in endoplasmic reticulum (ER)-to-Golgi transport of GPI-anchored protein. This Xenopus laevis (African clawed frog) protein is GPI inositol-deacylase.